The following is a 305-amino-acid chain: MASAFRSSTRLILVLGILILCSVSSVRSWSKEGHILTCRIAQNLLEAGPAHVVENLLPDYVKGDLSALCVWPDQIRHWYKYRWTSHLHYIDTPDQACSYEYSRDCHDQHGLKDMCVDGAIQNFTSQLQHYGEGTSDRRYNMTEALLFLSHFMGDIHQPMHVGFTSDEGGNTIDLRWYKHKSNLHHVWDREIILTALKENYDKNLDLLQEDLEKNITNGLWHDDLSSWTECNDLIACPHKYASESIKLACKWGYKGVKSGETLSEEYFNTRLPIVMKRIVQGGVRLAMILNRVFSDDHAIAGVAAT.

The first 28 residues, 1-28 (MASAFRSSTRLILVLGILILCSVSSVRS), serve as a signal peptide directing secretion. 2 residues coordinate a divalent metal cation: tryptophan 29 and histidine 34. Residue 29–34 (WSKEGH) participates in substrate binding. A disulfide bond links cysteine 38 and cysteine 69. A divalent metal cation is bound by residues aspartate 73 and histidine 88. Substrate contacts are provided by residues 73–79 (DQIRHWY), 88–91 (HYID), and 98–103 (SYEYSR). 3 disulfide bridges follow: cysteine 97-cysteine 249, cysteine 105-cysteine 115, and cysteine 230-cysteine 236. The substrate site is built by asparagine 122 and tyrosine 139. Asparagine 122 carries N-linked (GlcNAc...) asparagine glycosylation. A glycan (N-linked (GlcNAc...) asparagine) is linked at asparagine 140. A divalent metal cation-binding residues include histidine 150, aspartate 154, histidine 160, histidine 184, and aspartate 188. The tract at residues 150 to 199 (HFMGDIHQPMHVGFTSDEGGNTIDLRWYKHKSNLHHVWDREIILTALKEN) is substrate binding. Residue asparagine 214 is glycosylated (N-linked (GlcNAc...) asparagine). Residues 287-305 (MILNRVFSDDHAIAGVAAT) constitute a propeptide, removed in mature form.

Belongs to the nuclease type I family. As to quaternary structure, monomer. It depends on Mn(2+) as a cofactor. Ca(2+) is required as a cofactor. In terms of tissue distribution, mostly expressed in flowers and during leaf and stem senescence, and, to a lower extent, detectable at low levels in roots, leaves, and stems. Particularly expressed in senescing tissues in a NAC92/ORE1-dependent manner.

It carries out the reaction Endonucleolytic cleavage to 5'-phosphomononucleotide and 5'-phosphooligonucleotide end-products.. Functionally, endonuclease that can use RNA, single-stranded and double-stranded DNA as substrates. Hydrolyzes single-stranded DNA and RNA without apparent specificity for bases during senescence. Endonuclease that recognizes and cleaves all types of mismatches with high efficiency, including heteroduplex double-stranded DNA. Maybe involved in programmed cell death (PCD) and senescence. The polypeptide is Endonuclease 1 (Arabidopsis thaliana (Mouse-ear cress)).